The chain runs to 341 residues: Thiamine-phosphate synthase (341 aa).

The unknown stretch occupies residues 1-123 (MAVVEEQVVL…AAAAKEWRYR (123 aa)). Residues 61–80 (AARDTPHDPGTGLEHPDEGV) are disordered. The tract at residues 124–341 (VYTLESTATG…AWFLERLNRG (218 aa)) is thiamine-phosphate synthase. 4-amino-2-methyl-5-(diphosphooxymethyl)pyrimidine contacts are provided by residues 171–175 (QLREK) and Asn203. The Mg(2+) site is built by Asp204 and Asp223. Ser242 provides a ligand contact to 4-amino-2-methyl-5-(diphosphooxymethyl)pyrimidine. 268-270 (TPT) contributes to the 2-[(2R,5Z)-2-carboxy-4-methylthiazol-5(2H)-ylidene]ethyl phosphate binding site. Lys271 is a binding site for 4-amino-2-methyl-5-(diphosphooxymethyl)pyrimidine. Gly298 is a binding site for 2-[(2R,5Z)-2-carboxy-4-methylthiazol-5(2H)-ylidene]ethyl phosphate.

This sequence belongs to the thiamine-phosphate synthase family. Requires Mg(2+) as cofactor.

It catalyses the reaction 2-[(2R,5Z)-2-carboxy-4-methylthiazol-5(2H)-ylidene]ethyl phosphate + 4-amino-2-methyl-5-(diphosphooxymethyl)pyrimidine + 2 H(+) = thiamine phosphate + CO2 + diphosphate. The enzyme catalyses 2-(2-carboxy-4-methylthiazol-5-yl)ethyl phosphate + 4-amino-2-methyl-5-(diphosphooxymethyl)pyrimidine + 2 H(+) = thiamine phosphate + CO2 + diphosphate. The catalysed reaction is 4-methyl-5-(2-phosphooxyethyl)-thiazole + 4-amino-2-methyl-5-(diphosphooxymethyl)pyrimidine + H(+) = thiamine phosphate + diphosphate. It participates in cofactor biosynthesis; thiamine diphosphate biosynthesis; thiamine phosphate from 4-amino-2-methyl-5-diphosphomethylpyrimidine and 4-methyl-5-(2-phosphoethyl)-thiazole: step 1/1. Its function is as follows. Condenses 4-methyl-5-(beta-hydroxyethyl)thiazole monophosphate (THZ-P) and 2-methyl-4-amino-5-hydroxymethyl pyrimidine pyrophosphate (HMP-PP) to form thiamine monophosphate (TMP). In Gloeobacter violaceus (strain ATCC 29082 / PCC 7421), this protein is Thiamine-phosphate synthase.